A 381-amino-acid chain; its full sequence is Succinyl-diaminopimelate desuccinylase 1 (381 aa).

Residue H70 coordinates Zn(2+). D72 is an active-site residue. Residue D103 coordinates Zn(2+). The Proton acceptor role is filled by E136. Positions 137, 165, and 354 each coordinate Zn(2+).

The protein belongs to the peptidase M20A family. DapE subfamily. In terms of assembly, homodimer. Zn(2+) serves as cofactor. Co(2+) is required as a cofactor.

It carries out the reaction N-succinyl-(2S,6S)-2,6-diaminopimelate + H2O = (2S,6S)-2,6-diaminopimelate + succinate. Its pathway is amino-acid biosynthesis; L-lysine biosynthesis via DAP pathway; LL-2,6-diaminopimelate from (S)-tetrahydrodipicolinate (succinylase route): step 3/3. Functionally, catalyzes the hydrolysis of N-succinyl-L,L-diaminopimelic acid (SDAP), forming succinate and LL-2,6-diaminopimelate (DAP), an intermediate involved in the bacterial biosynthesis of lysine and meso-diaminopimelic acid, an essential component of bacterial cell walls. The polypeptide is Succinyl-diaminopimelate desuccinylase 1 (Ruegeria sp. (strain TM1040) (Silicibacter sp.)).